The chain runs to 64 residues: Conotoxin LiC121 (64 aa).

An N-terminal signal peptide occupies residues M1–A22. Residues H23–I48 constitute a propeptide that is removed on maturation.

Belongs to the conotoxin T superfamily. Post-translationally, contains 2 disulfide bonds that can be either 'C1-C3, C2-C4' or 'C1-C4, C2-C3', since these disulfide connectivities have been observed for conotoxins with cysteine framework V (for examples, see AC P0DQQ7 and AC P81755). Expressed by the venom duct.

Its subcellular location is the secreted. This Conus lividus (Livid cone) protein is Conotoxin LiC121.